A 206-amino-acid polypeptide reads, in one-letter code: Large ribosomal subunit protein uL4 (206 aa).

The segment at 43–78 (ARSGNRKQKDREEVKHTTKKPWRQKGTGRARAGMSS) is disordered. The span at 49 to 58 (KQKDREEVKH) shows a compositional bias: basic and acidic residues. Residues 59-70 (TTKKPWRQKGTG) are compositionally biased toward basic residues.

The protein belongs to the universal ribosomal protein uL4 family. In terms of assembly, part of the 50S ribosomal subunit.

In terms of biological role, one of the primary rRNA binding proteins, this protein initially binds near the 5'-end of the 23S rRNA. It is important during the early stages of 50S assembly. It makes multiple contacts with different domains of the 23S rRNA in the assembled 50S subunit and ribosome. Its function is as follows. Forms part of the polypeptide exit tunnel. The protein is Large ribosomal subunit protein uL4 of Ralstonia nicotianae (strain ATCC BAA-1114 / GMI1000) (Ralstonia solanacearum).